The primary structure comprises 492 residues: Beclin 1-associated autophagy-related key regulator (492 aa).

At Ser29 the chain carries Phosphoserine. Residues Cys43–Cys58 are cysteine repeats. Residues Asp71–Thr180 adopt a coiled-coil conformation. A disordered region spans residues Pro410–Met473. The segment at Ala413–Arg492 is BATS. Over residues Glu415–Thr433 the composition is skewed to acidic residues. A Phosphoserine modification is found at Ser416. Position 429 is a phosphothreonine (Thr429). Over residues Ser448 to Met473 the composition is skewed to low complexity.

It belongs to the ATG14 family. Forms homooligomers; homo-oligomerization is essential for the roles in membrane tethering and enhancement of SNARE-mediated fusion. Component of the PI3K (PI3KC3/PI3K-III/class III phosphatidylinositol 3-kinase) complex I (PI3KC3-C1) in which the core composed of the catalytic subunit PIK3C3, the regulatory subunit PIK3R4 and BECN1 is associated with ATG14. PI3KC3-C1 displays a V-shaped architecture with PIK3R4 serving as a bridge between PIK3C3 and the ATG14:BECN1 subcomplex. PI3KC3-C1 can associate with further regulatory subunits. Interacts with PIK3CB. Interacts (via coiled-coil domain) with BECN2 (via coiled-coil domain); this interaction is tighter than BECN2 self-association. Interacts with the STX17-SNAP29 binary t-SNARE complex. Interacts with NRBF2. Interacts with PIK3C3 and BECN1; this interaction is increased in the absence of TMEM39A. Interacts with STEEP1; the interaction is required for trafficking of STING1 from the endoplasmic reticulum. Interacts with ARMC3 (via ARM domains). In terms of processing, ubiquitinated via 'Lys-6', 'Lys-11' and 'Lys-63'-linked polyubiquitin chains on multiple lysines by MARCHF7, leading to ATG14 aggregation and loss of interaction with STX17.

Its subcellular location is the cytoplasm. It is found in the endoplasmic reticulum membrane. The protein resides in the preautophagosomal structure membrane. The protein localises to the cytoplasmic vesicle. It localises to the autophagosome membrane. Required for both basal and inducible autophagy. Determines the localization of the autophagy-specific PI3-kinase complex PI3KC3-C1. Plays a role in autophagosome formation and MAP1LC3/LC3 conjugation to phosphatidylethanolamine. Promotes BECN1 translocation from the trans-Golgi network to autophagosomes. Enhances PIK3C3 activity in a BECN1-dependent manner. Essential for the autophagy-dependent phosphorylation of BECN1. Stimulates the phosphorylation of BECN1, but suppresses the phosphorylation PIK3C3 by AMPK. Binds to STX17-SNAP29 binary t-SNARE complex on autophagosomes and primes it for VAMP8 interaction to promote autophagosome-endolysosome fusion. Modulates the hepatic lipid metabolism. This chain is Beclin 1-associated autophagy-related key regulator, found in Homo sapiens (Human).